We begin with the raw amino-acid sequence, 48 residues long: Photosystem II reaction center protein K (48 aa).

Residues 1–11 constitute a propeptide that is removed on maturation; it reads MFLFNLEQSIG. Residues 23 to 43 traverse the membrane as a helical segment; that stretch reads LVDVLPIIPLLFLLLAFVWQA.

This sequence belongs to the PsbK family. In terms of assembly, PSII is composed of 1 copy each of membrane proteins PsbA, PsbB, PsbC, PsbD, PsbE, PsbF, PsbH, PsbI, PsbJ, PsbK, PsbL, PsbM, PsbT, PsbX, PsbY, PsbZ, Psb30/Ycf12, at least 3 peripheral proteins of the oxygen-evolving complex and a large number of cofactors. It forms dimeric complexes.

The protein localises to the plastid. It localises to the chloroplast thylakoid membrane. Its function is as follows. One of the components of the core complex of photosystem II (PSII). PSII is a light-driven water:plastoquinone oxidoreductase that uses light energy to abstract electrons from H(2)O, generating O(2) and a proton gradient subsequently used for ATP formation. It consists of a core antenna complex that captures photons, and an electron transfer chain that converts photonic excitation into a charge separation. This is Photosystem II reaction center protein K from Lepocinclis buetschlii.